The following is a 571-amino-acid chain: Proline--tRNA ligase (571 aa).

This sequence belongs to the class-II aminoacyl-tRNA synthetase family. ProS type 1 subfamily. In terms of assembly, homodimer.

It localises to the cytoplasm. The catalysed reaction is tRNA(Pro) + L-proline + ATP = L-prolyl-tRNA(Pro) + AMP + diphosphate. Functionally, catalyzes the attachment of proline to tRNA(Pro) in a two-step reaction: proline is first activated by ATP to form Pro-AMP and then transferred to the acceptor end of tRNA(Pro). As ProRS can inadvertently accommodate and process non-cognate amino acids such as alanine and cysteine, to avoid such errors it has two additional distinct editing activities against alanine. One activity is designated as 'pretransfer' editing and involves the tRNA(Pro)-independent hydrolysis of activated Ala-AMP. The other activity is designated 'posttransfer' editing and involves deacylation of mischarged Ala-tRNA(Pro). The misacylated Cys-tRNA(Pro) is not edited by ProRS. This is Proline--tRNA ligase from Shewanella frigidimarina (strain NCIMB 400).